Consider the following 229-residue polypeptide: Matrix protein (229 aa).

A compositionally biased stretch (low complexity) spans 1–10 (MSSLKKILGL). The interval 1–23 (MSSLKKILGLKGKGKKSKKLGIA) is disordered. The short motif at 2–4 (SSL) is the dynamin binding element. The PPXY motif signature appears at 24–27 (PPPY). A PTAP/PSAP motif motif is present at residues 37 to 40 (PSAP).

The protein belongs to the vesiculoviruses matrix protein family. Homomultimer. Interacts with viral nucleocapsid; this interaction contributes to the virion assembly. Interacts with the viral envelope glycoprotein; this interaction contributes to the virion assembly. Interacts with host RAE1-NUP98 complex. Interacts with host NEDD4 and TSG101. Interacts with host dynamin. Interacts with host NDUFAF4; the interaction inhibits viral propagation and is independent of interferon activation. Interacts with host GTF2H5; the interaction may inhibit host transcription. In terms of processing, phosphorylated by host.

The protein localises to the virion. It is found in the host endomembrane system. Its subcellular location is the host nucleus membrane. It localises to the host nucleus. The protein resides in the host cytoplasm. Its function is as follows. Forms a double layer around the helical nucleocapsid, the inner matrix layer binding to the N helix and the outer matrix layer binding to the envelope glycoprotein. Plays a major role in assembly and budding of virion, by recruiting cellular partners of the ESCRT complexes that play a key role in releasing the budding particle from the host membrane. Condensates the ribonucleocapsid core during virus assembly. Inhibits the host mRNA nuclear export thereby inducing the shut off of cellular transcription and preventing the interferon signaling and the establishment of antiviral state in infected cells. This shutoff presumably inhibits interferon signaling and thus establishment of antiviral state in virus infected cells. Induces cell-rounding, cytoskeleton disorganization and apoptosis in infected cell. Inhibits host transcription, possibly through interaction with host DNA repair factor IIH/TFIIH GTF2H5 subunit. This chain is Matrix protein (M), found in Aedes (Bovine).